Here is a 502-residue protein sequence, read N- to C-terminus: ATP synthase subunit alpha (502 aa).

169 to 176 (GDRQTGKT) is a binding site for ATP.

This sequence belongs to the ATPase alpha/beta chains family. In terms of assembly, F-type ATPases have 2 components, CF(1) - the catalytic core - and CF(0) - the membrane proton channel. CF(1) has five subunits: alpha(3), beta(3), gamma(1), delta(1), epsilon(1). CF(0) has three main subunits: a(1), b(2) and c(9-12). The alpha and beta chains form an alternating ring which encloses part of the gamma chain. CF(1) is attached to CF(0) by a central stalk formed by the gamma and epsilon chains, while a peripheral stalk is formed by the delta and b chains.

It localises to the cell inner membrane. The enzyme catalyses ATP + H2O + 4 H(+)(in) = ADP + phosphate + 5 H(+)(out). Functionally, produces ATP from ADP in the presence of a proton gradient across the membrane. The alpha chain is a regulatory subunit. The protein is ATP synthase subunit alpha of Citrifermentans bemidjiense (strain ATCC BAA-1014 / DSM 16622 / JCM 12645 / Bem) (Geobacter bemidjiensis).